The following is a 180-amino-acid chain: Large ribosomal subunit protein uL6 (180 aa).

The protein belongs to the universal ribosomal protein uL6 family. Part of the 50S ribosomal subunit.

Its function is as follows. This protein binds to the 23S rRNA, and is important in its secondary structure. It is located near the subunit interface in the base of the L7/L12 stalk, and near the tRNA binding site of the peptidyltransferase center. In Protochlamydia amoebophila (strain UWE25), this protein is Large ribosomal subunit protein uL6.